The chain runs to 278 residues: Octanoyltransferase LipM (278 aa).

In terms of domain architecture, BPL/LPL catalytic spans 33–248 (KKMPPTIRFY…GFEKGLDVEL (216 aa)). Residue C150 is the Acyl-thioester intermediate of the active site.

Belongs to the octanoyltransferase LipM family. Monomer.

The catalysed reaction is octanoyl-[ACP] + L-lysyl-[protein] = N(6)-octanoyl-L-lysyl-[protein] + holo-[ACP] + H(+). Its pathway is protein modification; protein lipoylation via endogenous pathway; protein N(6)-(lipoyl)lysine from octanoyl-[acyl-carrier-protein]. Catalyzes the transfer of endogenously produced octanoic acid from octanoyl-acyl-carrier-protein onto the lipoyl domain of GcvH, an intermediate carrier during protein lipoylation. This Bacillus cereus (strain ATCC 14579 / DSM 31 / CCUG 7414 / JCM 2152 / NBRC 15305 / NCIMB 9373 / NCTC 2599 / NRRL B-3711) protein is Octanoyltransferase LipM.